Consider the following 318-residue polypeptide: MTQTGSARFEGDSWDLASSVGLTATMVAAARAVAGRAPGALVNDQFAEPLVRAVGVDFFVRMASGELDPDELAEDEANGLRRFADAMAIRTHYFDNFFLDATRAGIRQAVILASGLDSRAYRLRWPAGTIVFEVDQPQVIDFKTTTLAGLGAAPTTDRRTVAVDLRDDWPTALQKAGFDNAQRTAWIAEGLLGYLSAEAQDRLLDQITAQSVPGSQFATEVLRDINRLNEEELRGRMRRLAERFRRHGLDLDMSGLVYFGDRTDARTYLADHGWRTASASTTDLLAEHGLPPIDGDDAPFGEVIYVSAELKQKHQDTR.

Residues aspartate 135 and 164–165 (DL) each bind S-adenosyl-L-methionine.

Belongs to the UPF0677 family.

In terms of biological role, exhibits S-adenosyl-L-methionine-dependent methyltransferase activity. This Mycobacterium bovis (strain BCG / Pasteur 1173P2) protein is Putative S-adenosyl-L-methionine-dependent methyltransferase BCG_0781c.